A 427-amino-acid polypeptide reads, in one-letter code: Trigger factor (427 aa).

The 86-residue stretch at G163–P248 folds into the PPIase FKBP-type domain.

It belongs to the FKBP-type PPIase family. Tig subfamily.

It localises to the cytoplasm. The enzyme catalyses [protein]-peptidylproline (omega=180) = [protein]-peptidylproline (omega=0). Functionally, involved in protein export. Acts as a chaperone by maintaining the newly synthesized protein in an open conformation. Functions as a peptidyl-prolyl cis-trans isomerase. This Streptococcus agalactiae serotype Ia (strain ATCC 27591 / A909 / CDC SS700) protein is Trigger factor.